The sequence spans 430 residues: MTAIAKIYAREILDSRGNPTLEAEVTLENAVCGRAAVPSGASTGTKEAVELRDGDKTRYLGKGVRAAVDNVNGVIAAALVGFDGADQTGLDHRLINLDGTENKGRLGANALLGVSLATAHAVAAARKQPLWMYLSTLGESKVSLPVPMMNIINGGAHADNNVDFQEFMVLPVGFASFSEALRAGTEIFHALKSVLKGQGLSTAVGDEGGFAPDLRSNVEALDAILEAIGRAGYIAGEDVLLGLDVASSEFRDNGKYNLVGENKRLTSEQFVDFLDDWVTQYPIISIEDGLAEDDWAGWKQLTERIGHKVQLVGDDLFVTNPKVFQEGITSGIANAILIKLNQIGTLTETLESIAMAHRAQYAAIVSHRSGETEDTSIADIAVATTATQIKTGSLCRSDRVAKYNQLLRIEQALGVGARYAGRDAFVSLKS.

Gln165 is a (2R)-2-phosphoglycerate binding site. Catalysis depends on Glu207, which acts as the Proton donor. The Mg(2+) site is built by Asp244, Glu287, and Asp314. (2R)-2-phosphoglycerate-binding residues include Lys339, Arg368, Ser369, and Lys390. Residue Lys339 is the Proton acceptor of the active site.

This sequence belongs to the enolase family. As to quaternary structure, component of the RNA degradosome, a multiprotein complex involved in RNA processing and mRNA degradation. It depends on Mg(2+) as a cofactor.

The protein resides in the cytoplasm. It is found in the secreted. Its subcellular location is the cell surface. It catalyses the reaction (2R)-2-phosphoglycerate = phosphoenolpyruvate + H2O. It functions in the pathway carbohydrate degradation; glycolysis; pyruvate from D-glyceraldehyde 3-phosphate: step 4/5. In terms of biological role, catalyzes the reversible conversion of 2-phosphoglycerate (2-PG) into phosphoenolpyruvate (PEP). It is essential for the degradation of carbohydrates via glycolysis. This chain is Enolase, found in Xylella fastidiosa (strain 9a5c).